The sequence spans 543 residues: ATP synthase subunit alpha (543 aa).

Position 174–181 (glycine 174–threonine 181) interacts with ATP.

The protein belongs to the ATPase alpha/beta chains family. As to quaternary structure, F-type ATPases have 2 components, CF(1) - the catalytic core - and CF(0) - the membrane proton channel. CF(1) has five subunits: alpha(3), beta(3), gamma(1), delta(1), epsilon(1). CF(0) has three main subunits: a(1), b(2) and c(9-12). The alpha and beta chains form an alternating ring which encloses part of the gamma chain. CF(1) is attached to CF(0) by a central stalk formed by the gamma and epsilon chains, while a peripheral stalk is formed by the delta and b chains.

It localises to the cell membrane. It catalyses the reaction ATP + H2O + 4 H(+)(in) = ADP + phosphate + 5 H(+)(out). Functionally, produces ATP from ADP in the presence of a proton gradient across the membrane. The alpha chain is a regulatory subunit. The polypeptide is ATP synthase subunit alpha (Bifidobacterium longum subsp. infantis (strain ATCC 15697 / DSM 20088 / JCM 1222 / NCTC 11817 / S12)).